Reading from the N-terminus, the 578-residue chain is Zinc finger protein with KRAB and SCAN domains 8 (578 aa).

Residues 1 to 20 (MAEESRKPSAPSPPDQTPEE) form a disordered region. Position 12 is a phosphoserine (S12). Residue K26 forms a Glycyl lysine isopeptide (Lys-Gly) (interchain with G-Cter in SUMO2) linkage. In terms of domain architecture, SCAN box spans 51–133 (RLRFRQLRYQ…TLLEDLERQI (83 aa)). Positions 158-205 (ASAPEPPNTQLQSEATQHKSPVPQESQERAMSTSQSPTRSQKGSSGDQ) are disordered. Over residues 165–205 (NTQLQSEATQHKSPVPQESQERAMSTSQSPTRSQKGSSGDQ) the composition is skewed to polar residues. Glycyl lysine isopeptide (Lys-Gly) (interchain with G-Cter in SUMO2) cross-links involve residues K176 and K199. At S201 the chain carries Phosphoserine. The 97-residue stretch at 220–316 (EKIEDMAVSL…GRLERQRGNP (97 aa)) folds into the KRAB domain. Residues K221, K272, and K288 each participate in a glycyl lysine isopeptide (Lys-Gly) (interchain with G-Cter in SUMO2) cross-link. 2 C2H2-type zinc fingers span residues 322–344 (HKCD…WRIH) and 350–372 (YQCN…QDIH). Glycyl lysine isopeptide (Lys-Gly) (interchain with G-Cter in SUMO2) cross-links involve residues K374 and K376. C2H2-type zinc fingers lie at residues 378–400 (YHCK…QRIH), 406–428 (YQCN…QRIH), 434–456 (YECN…QRIH), 462–484 (YECD…QRSH), 490–512 (YKCN…QRIH), 518–540 (YKCK…LRIH), and 546–568 (YQCN…QRIH). Residues K413 and K441 each participate in a glycyl lysine isopeptide (Lys-Gly) (interchain with G-Cter in SUMO2) cross-link. A Glycyl lysine isopeptide (Lys-Gly) (interchain with G-Cter in SUMO2) cross-link involves residue K502. K572 participates in a covalent cross-link: Glycyl lysine isopeptide (Lys-Gly) (interchain with G-Cter in SUMO2).

Belongs to the krueppel C2H2-type zinc-finger protein family.

The protein localises to the nucleus. Its function is as follows. May be involved in transcriptional regulation. The chain is Zinc finger protein with KRAB and SCAN domains 8 (ZKSCAN8) from Homo sapiens (Human).